Reading from the N-terminus, the 237-residue chain is DNA replication inhibitor toxin SocB (237 aa).

In terms of assembly, interacts with cognate antitoxin SocA and with beta sliding clamp (dnaN). Degraded by ClpXP, recognition of SocB by ClpX requires SocA.

It localises to the cytoplasm. Toxic component of an atypical type II toxin-antitoxin (TA) system. Upon overexpression in the absence of its cognate antitoxin SocA, leads to inhibition of colony formation, cellular filamentation, incomplete DNA replication and induction of the SOS response. Exercises toxicity by binding the beta sliding clamp (dnaN), blocking DNA replication and leading to premature replication fork collapse and incomplete cell division. Unlike most type II TA systems, the SocB toxin is unstable and targeted by its cognate antitoxin SocA for degradation by ClpXP. Not toxic upon expression in E.coli. The chain is DNA replication inhibitor toxin SocB from Caulobacter vibrioides (strain NA1000 / CB15N) (Caulobacter crescentus).